Here is a 256-residue protein sequence, read N- to C-terminus: Hydroxyacylglutathione hydrolase (256 aa).

Zn(2+) is bound by residues His-55, His-57, Asp-59, His-60, His-113, Asp-130, and His-168.

The protein belongs to the metallo-beta-lactamase superfamily. Glyoxalase II family. Monomer. It depends on Zn(2+) as a cofactor.

It carries out the reaction an S-(2-hydroxyacyl)glutathione + H2O = a 2-hydroxy carboxylate + glutathione + H(+). It participates in secondary metabolite metabolism; methylglyoxal degradation; (R)-lactate from methylglyoxal: step 2/2. Its function is as follows. Thiolesterase that catalyzes the hydrolysis of S-D-lactoyl-glutathione to form glutathione and D-lactic acid. This is Hydroxyacylglutathione hydrolase from Alkalilimnicola ehrlichii (strain ATCC BAA-1101 / DSM 17681 / MLHE-1).